Here is a 344-residue protein sequence, read N- to C-terminus: Dihydroorotase (344 aa).

Zn(2+) contacts are provided by H14 and H16. Substrate contacts are provided by residues 16–18 (HLR) and N42. Zn(2+)-binding residues include K100, H137, and H175. The residue at position 100 (K100) is an N6-carboxylysine. H137 contributes to the substrate binding site. L220 provides a ligand contact to substrate. D248 provides a ligand contact to Zn(2+). D248 is a catalytic residue. The substrate site is built by H252 and A264.

It belongs to the metallo-dependent hydrolases superfamily. DHOase family. Class II DHOase subfamily. Homodimer. It depends on Zn(2+) as a cofactor.

The catalysed reaction is (S)-dihydroorotate + H2O = N-carbamoyl-L-aspartate + H(+). Its pathway is pyrimidine metabolism; UMP biosynthesis via de novo pathway; (S)-dihydroorotate from bicarbonate: step 3/3. Catalyzes the reversible cyclization of carbamoyl aspartate to dihydroorotate. This is Dihydroorotase from Cupriavidus pinatubonensis (strain JMP 134 / LMG 1197) (Cupriavidus necator (strain JMP 134)).